The following is a 447-amino-acid chain: Protein O-GlcNAcase (447 aa).

The region spanning 1–277 (MLTGVIEGFY…TTGAYLADPD (277 aa)) is the GH84 domain. 3 residues coordinate a protein: G8, K39, and D115. D116 functions as the Proton donor in the catalytic mechanism. A protein is bound by residues Y160, 219–221 (WDN), D226, and N254.

It belongs to the glycosyl hydrolase 84 family.

It catalyses the reaction 3-O-(N-acetyl-beta-D-glucosaminyl)-L-seryl-[protein] + H2O = N-acetyl-D-glucosamine + L-seryl-[protein]. It carries out the reaction 3-O-(N-acetyl-beta-D-glucosaminyl)-L-threonyl-[protein] + H2O = L-threonyl-[protein] + N-acetyl-D-glucosamine. With respect to regulation, inhibited by PUGNac (O-(2-acetamido-2-deoxy-D-glucopyranosylidene)amino-N-phenylcarbamate). Cleaves GlcNAc from O-glycosylated proteins. Can use p-nitrophenyl-beta-GlcNAc and 4-methylumbelliferone-GlcNAc as substrate (in vitro). The protein is Protein O-GlcNAcase of Oceanicola granulosus (strain ATCC BAA-861 / DSM 15982 / KCTC 12143 / HTCC2516).